Here is a 323-residue protein sequence, read N- to C-terminus: Acetyl esterase (323 aa).

The short motif at 91 to 93 (HGG) is the Involved in the stabilization of the negatively charged intermediate by the formation of the oxyanion hole element. Active-site residues include serine 165, aspartate 262, and histidine 292.

It belongs to the 'GDXG' lipolytic enzyme family. As to quaternary structure, homodimer. Interacts with MalT and MelA.

It is found in the cytoplasm. Displays esterase activity towards short chain fatty esters (acyl chain length of up to 8 carbons). Able to hydrolyze triacetylglycerol (triacetin) and tributyrylglycerol (tributyrin), but not trioleylglycerol (triolein) or cholesterol oleate. Negatively regulates MalT activity by antagonizing maltotriose binding. Inhibits MelA galactosidase activity. The chain is Acetyl esterase from Salmonella paratyphi A (strain AKU_12601).